A 223-amino-acid chain; its full sequence is Glutathione S-transferase A2 (223 aa).

Alanine 2 carries the post-translational modification N-acetylalanine. A GST N-terminal domain is found at 3–83 (GKPKLHYFNG…YIATKYNLYG (81 aa)). Lysine 4 is subject to N6-succinyllysine. Glutathione-binding positions include tyrosine 9, arginine 45, 54 to 55 (QV), and 67 to 68 (QT). The region spanning 85-208 (DMKERALIDM…QPGSQRKPPM (124 aa)) is the GST C-terminal domain.

The protein belongs to the GST superfamily. Alpha family. As to quaternary structure, homodimer. As to expression, expressed in corpus luteum, adrenal gland, testis, liver, lung, thyroid and kidney.

It localises to the cytoplasm. It carries out the reaction RX + glutathione = an S-substituted glutathione + a halide anion + H(+). Conjugation of reduced glutathione to a wide number of exogenous and endogenous hydrophobic electrophiles. The polypeptide is Glutathione S-transferase A2 (GSTA2) (Bos taurus (Bovine)).